Here is a 139-residue protein sequence, read N- to C-terminus: Cell division protein SepF (139 aa).

It belongs to the SepF family. In terms of assembly, homodimer. Interacts with FtsZ.

It is found in the cytoplasm. In terms of biological role, cell division protein that is part of the divisome complex and is recruited early to the Z-ring. Probably stimulates Z-ring formation, perhaps through the cross-linking of FtsZ protofilaments. Its function overlaps with FtsA. The sequence is that of Cell division protein SepF from Coprothermobacter proteolyticus (strain ATCC 35245 / DSM 5265 / OCM 4 / BT).